The following is a 241-amino-acid chain: Probable transcriptional regulatory protein RSc2190 (241 aa).

Belongs to the TACO1 family.

Its subcellular location is the cytoplasm. The protein is Probable transcriptional regulatory protein RSc2190 of Ralstonia nicotianae (strain ATCC BAA-1114 / GMI1000) (Ralstonia solanacearum).